We begin with the raw amino-acid sequence, 295 residues long: Shikimate dehydrogenase (NADP(+)) (295 aa).

Residues 18 to 20 (SRS) and Thr-66 each bind shikimate. The active-site Proton acceptor is the Lys-70. Shikimate is bound by residues Asn-91 and Asp-106. Residues 130–134 (GNGGA) and Met-235 each bind NADP(+). Tyr-237 contacts shikimate. Residue Gly-258 participates in NADP(+) binding.

This sequence belongs to the shikimate dehydrogenase family. Homodimer.

The catalysed reaction is shikimate + NADP(+) = 3-dehydroshikimate + NADPH + H(+). Its pathway is metabolic intermediate biosynthesis; chorismate biosynthesis; chorismate from D-erythrose 4-phosphate and phosphoenolpyruvate: step 4/7. Involved in the biosynthesis of the chorismate, which leads to the biosynthesis of aromatic amino acids. Catalyzes the reversible NADPH linked reduction of 3-dehydroshikimate (DHSA) to yield shikimate (SA). This is Shikimate dehydrogenase (NADP(+)) from Chlorobium phaeobacteroides (strain DSM 266 / SMG 266 / 2430).